We begin with the raw amino-acid sequence, 213 residues long: Outer envelope pore protein 24B, chloroplastic (213 aa).

The Cytoplasmic segment spans residues Met1–Met3. A beta stranded membrane pass occupies residues Lys4–Thr13. Residues Asp14–Gly18 are Chloroplast intermembrane-facing. The chain crosses the membrane as a beta stranded span at residues Ile19–Asp28. Residues Ile29–Arg32 lie on the Cytoplasmic side of the membrane. A beta stranded membrane pass occupies residues Ala33–Ala42. Residues Gly43–Lys55 lie on the Chloroplast intermembrane side of the membrane. The chain crosses the membrane as a beta stranded span at residues Pro56–Asn64. Topologically, residues Val65–Val70 are cytoplasmic. A beta stranded transmembrane segment spans residues Arg71–Ile80. The Chloroplast intermembrane segment spans residues Ala81–Arg93. Residues Ala94–Ser103 form a beta stranded membrane-spanning segment. Over Leu104–Ser108 the chain is Cytoplasmic. A beta stranded transmembrane segment spans residues Ala109–Val118. Residues Gly119–Asn122 are Chloroplast intermembrane-facing. The beta stranded transmembrane segment at Cys123–Gly132 threads the bilayer. The Cytoplasmic portion of the chain corresponds to Gly133 to Ala144. Residues Lys145 to Phe156 traverse the membrane as a beta stranded segment. The Chloroplast intermembrane portion of the chain corresponds to Tyr157–Gly159. A beta stranded membrane pass occupies residues Asp160–Thr168. Residues Ser169–Ser170 are Cytoplasmic-facing. The chain crosses the membrane as a beta stranded span at residues Lys171–Arg179. Residues Asn180–Pro201 are Chloroplast intermembrane-facing. The beta stranded transmembrane segment at Lys202 to Leu211 threads the bilayer. Topologically, residues Glu212 to Met213 are cytoplasmic.

This sequence belongs to the plastid outer envelope porin OEP24 (TC 1.B.28) family. In terms of assembly, homooligomers form large rather nonselective pores in plastidial outer membranes.

The protein localises to the plastid. The protein resides in the etioplast membrane. Its subcellular location is the chloroplast outer membrane. Its function is as follows. High-conductance voltage-dependent solute channel with a slight selectivity for cations transporting triosephosphates, dicarboxylic acids, ATP, inorganic phosphate (Pi), sugars, and positively or negatively charged amino acids. In Arabidopsis thaliana (Mouse-ear cress), this protein is Outer envelope pore protein 24B, chloroplastic (OEP24B).